A 693-amino-acid polypeptide reads, in one-letter code: UvrABC system protein B (693 aa).

Residues 35–188 (ERIKNGEKDV…DDLLRKFVSM (154 aa)) form the Helicase ATP-binding domain. 48–55 (GATGTGKS) contributes to the ATP binding site. The Beta-hairpin signature appears at 101-124 (YYDYYQPEAYVAQTDTFIEKDSSV). The region spanning 438 to 604 (QIDDLLGEIK…PLRKKIADIT (167 aa)) is the Helicase C-terminal domain. Residues 648–683 (VGLIEQLTEQMHAAAGELQFELAARLRDEVGELKKE) form the UVR domain.

The protein belongs to the UvrB family. In terms of assembly, forms a heterotetramer with UvrA during the search for lesions. Interacts with UvrC in an incision complex.

It localises to the cytoplasm. Its function is as follows. The UvrABC repair system catalyzes the recognition and processing of DNA lesions. A damage recognition complex composed of 2 UvrA and 2 UvrB subunits scans DNA for abnormalities. Upon binding of the UvrA(2)B(2) complex to a putative damaged site, the DNA wraps around one UvrB monomer. DNA wrap is dependent on ATP binding by UvrB and probably causes local melting of the DNA helix, facilitating insertion of UvrB beta-hairpin between the DNA strands. Then UvrB probes one DNA strand for the presence of a lesion. If a lesion is found the UvrA subunits dissociate and the UvrB-DNA preincision complex is formed. This complex is subsequently bound by UvrC and the second UvrB is released. If no lesion is found, the DNA wraps around the other UvrB subunit that will check the other stand for damage. The polypeptide is UvrABC system protein B (Arthrobacter sp. (strain FB24)).